Reading from the N-terminus, the 160-residue chain is Serine-protein kinase RsbW (160 aa).

The protein belongs to the anti-sigma-factor family.

It catalyses the reaction L-seryl-[protein] + ATP = O-phospho-L-seryl-[protein] + ADP + H(+). The enzyme catalyses L-threonyl-[protein] + ATP = O-phospho-L-threonyl-[protein] + ADP + H(+). In terms of biological role, negative regulator of sigma-B activity. Phosphorylates and inactivates its specific antagonist protein, RsbV. Upon phosphorylation of RsbV, RsbW is released and binds to sigma-B, thereby blocking its ability to form an RNA polymerase holoenzyme (E-sigma-B). The protein is Serine-protein kinase RsbW of Bacillus mycoides (strain KBAB4) (Bacillus weihenstephanensis).